The primary structure comprises 158 residues: Copper transporter 2 (158 aa).

The segment at 1-20 (MDHDHMHDMPPPSPSSSSMS) is disordered. Transmembrane regions (helical) follow at residues 53–73 (GMYA…EWLA) and 104–124 (YLVM…AIAG).

This sequence belongs to the copper transporter (Ctr) (TC 1.A.56) family. SLC31A subfamily. As to expression, highly expressed in leaves and at lower levels in roots, stems and flowers.

The protein resides in the membrane. Its function is as follows. Involved in the transport of copper. In Arabidopsis thaliana (Mouse-ear cress), this protein is Copper transporter 2 (COPT2).